Here is a 294-residue protein sequence, read N- to C-terminus: Endonuclease G, mitochondrial (294 aa).

The N-terminal 44 residues, 1–44, are a transit peptide targeting the mitochondrion; it reads MRALRAGLTLALGAGLGAAAEHWRRREGKAPGLLGRVPLLPVVA. Position 125 is a phosphothreonine (T125). H138 serves as the catalytic Proton acceptor. N169 lines the Mg(2+) pocket. Residues 283-293 are essential for deoxyribonuclease activity; that stretch reads AGNLKAITAGS.

Belongs to the DNA/RNA non-specific endonuclease family. Homodimer; disulfide-linked. Homodimerization is essential for its activity. Interacts with YWHAG. The cofactor is Mg(2+). Post-translationally, GSK3-beta-mediated phosphorylation at Thr-125 is necessary for its interaction with YWHAG and the induction of autophagy.

It localises to the mitochondrion. Its function is as follows. Endonuclease that preferentially catalyzes the cleavage of double-stranded 5-hydroxymethylcytosine (5hmC)-modified DNA. The 5hmC-modified nucleotide does not increase the binding affinity, but instead increases the efficiency of cutting and specifies the site of cleavage for the modified DNAs. Shows significantly higher affinity for four-stranded Holliday junction over duplex and single-stranded DNAs. Promotes conservative recombination when the DNA is 5hmC-modified. Promotes autophagy through the suppression of mTOR by its phosphorylation-mediated interaction with YWHAG and its endonuclease activity-mediated DNA damage response. GSK3-beta mediated phosphorylation of ENDOG enhances its interaction with YWHAG, leading to the release of TSC2 and PIK3C3 from YWHAG resulting in mTOR pathway suppression and autophagy initiation. Promotes cleavage of mtDNA in response to oxidative and nitrosative stress, in turn inducing compensatory mtDNA replication. The polypeptide is Endonuclease G, mitochondrial (Endog) (Mus musculus (Mouse)).